The primary structure comprises 65 residues: UPF0434 protein RPB_0294 (65 aa).

It belongs to the UPF0434 family.

The sequence is that of UPF0434 protein RPB_0294 from Rhodopseudomonas palustris (strain HaA2).